The sequence spans 191 residues: Probable GTP-binding protein EngB (191 aa).

The 169-residue stretch at 22 to 190 folds into the EngB-type G domain; it reads RLPEIAFLGR…WQAITTTLQA (169 aa). GTP-binding positions include 30–37, 57–61, 75–78, 142–145, and 169–171; these read GRSNVGKS, GRTQT, DLPG, TKTD, and FSA. Positions 37 and 59 each coordinate Mg(2+).

The protein belongs to the TRAFAC class TrmE-Era-EngA-EngB-Septin-like GTPase superfamily. EngB GTPase family. It depends on Mg(2+) as a cofactor.

Functionally, necessary for normal cell division and for the maintenance of normal septation. The polypeptide is Probable GTP-binding protein EngB (Solibacter usitatus (strain Ellin6076)).